A 460-amino-acid polypeptide reads, in one-letter code: Ribosomal protein uS12 methylthiotransferase RimO (460 aa).

Residues 9-119 enclose the MTTase N-terminal domain; the sequence is PKVGFVSLGC…VMEAVHAALP (111 aa). [4Fe-4S] cluster contacts are provided by Cys18, Cys54, Cys83, Cys150, Cys154, and Cys157. One can recognise a Radical SAM core domain in the interval 136–374; sequence LTPRHYAYLK…AKQAEISALR (239 aa). One can recognise a TRAM domain in the interval 376 to 444; the sequence is EAKIGSVQQC…EHDLFGDALP (69 aa).

It belongs to the methylthiotransferase family. RimO subfamily. Requires [4Fe-4S] cluster as cofactor.

It is found in the cytoplasm. The catalysed reaction is L-aspartate(89)-[ribosomal protein uS12]-hydrogen + (sulfur carrier)-SH + AH2 + 2 S-adenosyl-L-methionine = 3-methylsulfanyl-L-aspartate(89)-[ribosomal protein uS12]-hydrogen + (sulfur carrier)-H + 5'-deoxyadenosine + L-methionine + A + S-adenosyl-L-homocysteine + 2 H(+). Functionally, catalyzes the methylthiolation of an aspartic acid residue of ribosomal protein uS12. This is Ribosomal protein uS12 methylthiotransferase RimO from Xanthomonas oryzae pv. oryzae (strain PXO99A).